The following is a 546-amino-acid chain: Elongator complex protein 3 (546 aa).

Positions 81-371 (RTASGIAVVA…YRVQRDIPMP (291 aa)) constitute a Radical SAM core domain. 3 residues coordinate [4Fe-4S] cluster: Cys98, Cys108, and Cys111. Acetyl-CoA is bound by residues Lys163, 473–476 (ELHV), 496–498 (FGM), and Tyr529. One can recognise an N-acetyltransferase domain in the interval 395–546 (TQCRDVRTRE…EGPYMVKRLQ (152 aa)).

This sequence belongs to the ELP3 family. Component of the elongator complex. [4Fe-4S] cluster serves as cofactor.

Its subcellular location is the cytoplasm. The protein localises to the nucleus. The catalysed reaction is uridine(34) in tRNA + acetyl-CoA + S-adenosyl-L-methionine + H2O = 5-(carboxymethyl)uridine(34) in tRNA + 5'-deoxyadenosine + L-methionine + CoA + 2 H(+). The protein operates within tRNA modification; 5-methoxycarbonylmethyl-2-thiouridine-tRNA biosynthesis. In terms of biological role, catalytic tRNA acetyltransferase subunit of the elongator complex which is required for multiple tRNA modifications, including mcm5U (5-methoxycarbonylmethyl uridine), mcm5s2U (5-methoxycarbonylmethyl-2-thiouridine), and ncm5U (5-carbamoylmethyl uridine). In the elongator complex, acts as a tRNA uridine(34) acetyltransferase by mediating formation of carboxymethyluridine in the wobble base at position 34 in tRNAs. In Gallus gallus (Chicken), this protein is Elongator complex protein 3.